The sequence spans 420 residues: MHLTELKNTPVSDLVKLGEEQMGLENLARLRKQDIVFAILKQHAKSGEDIFGGGVLEILPDGFGFLRSADSSYLAGPDDIYVSPSQIRRFNLQTGDKIEGKIRPPKEGERYFALLKVDQVNDDKPEVSRSKILFENLTPLHANSRLRMERGNGSTEDLTARILDLASPIGKGQRGLIVAPPKAGKTMLLQNIAQSITHNYPDVELIVLLIDERPEEVTEMQRSVKGEVIASTFDEPATRHVQVAEMVIEKAKRSVEHKKDVVILLDSITRLARAYNTVTPASGKILSGGVDANALHRPKRFFGAARNVEEGGSLTIIATALVDTGSKMDEVIFEEFKGTGNMELHLSRKIAERRVFPAIDFKRSGTRKEDLLTTADELQKMWILRKILNPMDEVDAMEFLIDKLMMAKTNEEFFEVMKRS.

Residues aspartate 49 to lysine 124 enclose the Rho RNA-BD domain. Residues glycine 170–glycine 175, lysine 182–methionine 187, and arginine 213 each bind ATP.

Belongs to the Rho family. As to quaternary structure, homohexamer. The homohexamer assembles into an open ring structure.

Facilitates transcription termination by a mechanism that involves Rho binding to the nascent RNA, activation of Rho's RNA-dependent ATPase activity, and release of the mRNA from the DNA template. The protein is Transcription termination factor Rho of Haemophilus influenzae (strain ATCC 51907 / DSM 11121 / KW20 / Rd).